The chain runs to 461 residues: V-type ATP synthase beta chain 1 (461 aa).

Belongs to the ATPase alpha/beta chains family.

In terms of biological role, produces ATP from ADP in the presence of a proton gradient across the membrane. The V-type beta chain is a regulatory subunit. This chain is V-type ATP synthase beta chain 1, found in Clostridium tetani (strain Massachusetts / E88).